The primary structure comprises 228 residues: Early nodulin-like protein 18 (228 aa).

Residues 1 to 26 form the signal peptide; the sequence is MSPSCSSCVNVLLIMCLMLLSLSADA. Residues 28 to 148 enclose the Phytocyanin domain; the sequence is KNYTVGESTG…GQHFMINVTH (121 aa). N-linked (GlcNAc...) asparagine glycosylation is found at asparagine 29, asparagine 71, asparagine 94, and asparagine 145. Cysteine 86 and cysteine 136 are oxidised to a cystine. Residues 148–211 are disordered; it reads HGQGLPDSSS…VHSKKSSSST (64 aa). Over residues 153–170 the composition is skewed to low complexity; it reads PDSSSPDDAAAPGPSESS. Residues 188 to 204 show a composition bias toward basic and acidic residues; it reads DHPKDIESADDDKEVHS. Serine 204 is lipidated: GPI-anchor amidated serine. The propeptide at 205 to 228 is removed in mature form; that stretch reads KKSSSSTTKTSLFCFVFMGLFASF.

The protein belongs to the early nodulin-like (ENODL) family. Mostly expressed in seedlings, roots and flowers, and, to a lower extent, in leaves, stems and seeds.

It localises to the cell membrane. In terms of biological role, may act as a carbohydrate transporter. This chain is Early nodulin-like protein 18, found in Arabidopsis thaliana (Mouse-ear cress).